The chain runs to 419 residues: Zinc finger protein Pegasus (419 aa).

3 C2H2-type zinc fingers span residues 79-101 (LKCRYCNYATRGTARLIEHIRIH), 107-129 (HRCHLCPFASAYERHLEAHMRSH), and 135-158 (YKCELCSFRCSDRSNLSHHRRRRH). Disordered stretches follow at residues 203–255 (LQKP…DQDM) and 310–360 (SVNT…TPVQ). Residues 208 to 228 (SEQHHLGDFTHDLPPHAHLHQ) show a composition bias toward basic and acidic residues. 2 stretches are compositionally biased toward polar residues: residues 310–320 (SVNTAQASSPI) and 341–360 (ERTSTPSGTNSQPGTPTPVQ). 2 C2H2-type zinc fingers span residues 366–388 (HHCPHCHIYFPDNILYTIHMGCH) and 394–418 (FQCNICGHRCRNSYDFACHFARGQH).

Belongs to the Ikaros C2H2-type zinc-finger protein family. As to quaternary structure, probably self-associates.

The protein resides in the nucleus. Transcriptional repressor that binds the core 5'GNNTGTNG-3' DNA consensus sequence. The protein is Zinc finger protein Pegasus (ikzf5) of Danio rerio (Zebrafish).